Reading from the N-terminus, the 121-residue chain is Protein YxiB (121 aa).

This is Protein YxiB (yxiB) from Bacillus subtilis (strain 168).